The sequence spans 1043 residues: Unconventional myosin-Ia (1043 aa).

One can recognise a Myosin motor domain in the interval 8–694; sequence VGVEDLILLE…TLFYLEEQRR (687 aa). 101–108 is a binding site for ATP; it reads GESGAGKT. Positions 571-593 are actin-binding; that stretch reads VAVLMKNLYSKNPNYIRCIKPND. IQ domains lie at 697 to 719, 720 to 742, and 743 to 772; these read LQQL…HYQQ, MRKS…HYGK, and IRSS…SGAA. The 185-residue stretch at 858–1042 folds into the TH1 domain; sequence KASYPQSVPI…KGSNAMEVTV (185 aa).

It belongs to the TRAFAC class myosin-kinesin ATPase superfamily. Myosin family. Phosphorylated by ALPK1.

Involved in directing the movement of organelles along actin filaments. The sequence is that of Unconventional myosin-Ia (Myo1a) from Mus musculus (Mouse).